The following is a 525-amino-acid chain: MIFSLDEELHRVSLDDKKNDIKVDYSSAIYNDINHEQGSSITYEESINHLSVHSNAIPLNGMSPAHRMRRRSSAYSKFPILTPPNTRRFSITGSDAMRTNTNRLSITPQDIISSNIGENELSRNLHDFKPVRVLGQGAYGKVLLVKDVNTSKLYAMKQLRKAEILISQTATDSKREDEDKNDGNNNDNDDGLSKRLERTFAERSILSEIEHPNIVKLFYSFHDNSKLYLLLQYIPGGELFYHLKEHGTLDETTVSFYAAEISCALRFLHTKGVVYRDLKPENCLLNQRGHLVLTDFGLSKKSANDSAVDEEDPENVNALYSIIGTPEYCAPEILLGKAYSQNCDWYSLGCLLYDMLVGKPPYTGSNHKVIINKIQQNKQGPKIPFYLSEGMKDILNALLKKETAKRWNVDKYWAKTGANNKPTKSKKKKSGAARTSLFTEHFIFRKIDWKLLESGQLQKTTLGPIVPVITDLELAENFDTEFTSMSYEETYTDSKPININSVSKSPDMFKGFSYKASGSYLEKYF.

Phosphoserine is present on residues serine 90 and serine 105. At threonine 107 the chain carries Phosphothreonine. One can recognise a Protein kinase domain in the interval 128–424 (FKPVRVLGQG…KTGANNKPTK (297 aa)). Residues 134–142 (LGQGAYGKV) and lysine 157 each bind ATP. The interval 170-193 (ATDSKREDEDKNDGNNNDNDDGLS) is disordered. Basic and acidic residues predominate over residues 172–182 (DSKREDEDKND). Aspartate 277 functions as the Proton acceptor in the catalytic mechanism. Serine 321 bears the Phosphoserine; by PKH1 or PKH2 mark. The AGC-kinase C-terminal domain maps to 445–524 (RKIDWKLLES…KASGSYLEKY (80 aa)). Threonine 490 is subject to Phosphothreonine; by TORC1. Position 513 is a phosphoserine; by TORC1 (serine 513).

The protein belongs to the protein kinase superfamily. AGC Ser/Thr protein kinase family. S6 kinase subfamily. Post-translationally, phosphorylated by PKA in a TORC1-dependent manner. Phosphorylation at PKA consensus sites RRxS/T decreases upon rapamycin treatment.

The protein localises to the cytoplasm. The enzyme catalyses L-seryl-[protein] + ATP = O-phospho-L-seryl-[protein] + ADP + H(+). It catalyses the reaction L-threonyl-[protein] + ATP = O-phospho-L-threonyl-[protein] + ADP + H(+). Functionally, AGC kinase which plays a role in TOR complex 1 (TORC1) signaling pathway which mediates temporal control of cell growth in response to nutrients. Required for phosphorylation of ribosomal protein S6 (RPS6A/RPS6B) at 'Ser-232' and 'Ser-233'. The protein is Serine/threonine-protein kinase YPK3 of Saccharomyces cerevisiae (strain ATCC 204508 / S288c) (Baker's yeast).